The sequence spans 865 residues: DNA topoisomerase 3-beta (865 aa).

Residues 6-151 (RVLMVAEKPS…KVYRARFSSV (146 aa)) enclose the Toprim domain. The Mg(2+) site is built by Glu12, Asp116, and Asp118. A Topo IA-type catalytic domain is found at 167-587 (NRDEALAVDA…HVIQQFRRKF (421 aa)). An interaction with DNA region spans residues 209–214 (SYGPCQ). Tyr331 acts as the O-(5'-phospho-DNA)-tyrosine intermediate in catalysis. Positions 833-853 (RRGGRGRGRGRGRGRGGRRGS) are enriched in basic residues. Residues 833–865 (RRGGRGRGRGRGRGRGGRRGSKSVDPKMSFRDF) form a disordered region. Over residues 854 to 865 (KSVDPKMSFRDF) the composition is skewed to basic and acidic residues.

The protein belongs to the type IA topoisomerase family. Mg(2+) is required as a cofactor.

The catalysed reaction is ATP-independent breakage of single-stranded DNA, followed by passage and rejoining.. Its function is as follows. Releases the supercoiling and torsional tension of DNA introduced during the DNA replication and transcription by transiently cleaving and rejoining one strand of the DNA duplex. Introduces a single-strand break via transesterification at a target site in duplex DNA. The scissile phosphodiester is attacked by the catalytic tyrosine of the enzyme, resulting in the formation of a DNA-(5'-phosphotyrosyl)-enzyme intermediate and the expulsion of a 3'-OH DNA strand. The free DNA strand than undergoes passage around the unbroken strand thus removing DNA supercoils. Finally, in the religation step, the DNA 3'-OH attacks the covalent intermediate to expel the active-site tyrosine and restore the DNA phosphodiester backbone. In Arabidopsis thaliana (Mouse-ear cress), this protein is DNA topoisomerase 3-beta.